The following is a 470-amino-acid chain: Zinc finger CCCH domain-containing protein 7 (470 aa).

The segment at 122 to 144 (AYSKKESEKQSGQNNTSTASRNH) is disordered. Residues 131 to 142 (QSGQNNTSTASR) show a composition bias toward polar residues. 5 consecutive C3H1-type zinc fingers follow at residues 240–269 (AKKKKYCQFFTRFGKCNKDDGKCPYVHDPS), 273–294 (VCTKFLNGLCANANCKLTHKVI), 295–321 (PERMPDCSYYLQGLCNNEACPYRHVHV), 322–349 (NPIAPICDGFLKGYCSEGDECRKKHSYN), and 350–372 (CPVFEATGSCSQGLKCKLHHPKN). A compositionally biased stretch (basic residues) spans 370 to 381 (PKNQSKGRKRKR). A disordered region spans residues 370–389 (PKNQSKGRKRKRTNEPSQKN).

Functionally, possesses RNA-binding and ribonuclease activities in vitro. This Arabidopsis thaliana (Mouse-ear cress) protein is Zinc finger CCCH domain-containing protein 7.